The sequence spans 145 residues: Lipoprotein signal peptidase (145 aa).

Transmembrane regions (helical) follow at residues 1 to 21, 57 to 77, and 79 to 99; these read MVYI…LLVM, YLFI…YYKT, and GSGM…GNLI. Residues aspartate 109 and aspartate 123 contribute to the active site. A helical transmembrane segment spans residues 115-135; the sequence is IWPVFNLADSSVVIGAALLIL.

This sequence belongs to the peptidase A8 family.

The protein localises to the cell inner membrane. The catalysed reaction is Release of signal peptides from bacterial membrane prolipoproteins. Hydrolyzes -Xaa-Yaa-Zaa-|-(S,diacylglyceryl)Cys-, in which Xaa is hydrophobic (preferably Leu), and Yaa (Ala or Ser) and Zaa (Gly or Ala) have small, neutral side chains.. It participates in protein modification; lipoprotein biosynthesis (signal peptide cleavage). This protein specifically catalyzes the removal of signal peptides from prolipoproteins. This Halothermothrix orenii (strain H 168 / OCM 544 / DSM 9562) protein is Lipoprotein signal peptidase.